Here is a 476-residue protein sequence, read N- to C-terminus: Adenylosuccinate synthetase, chloroplastic (476 aa).

Residues 1 to 20 (AAAAAGRGRSFSPAAPAPSS) are compositionally biased toward low complexity. The segment at 1–34 (AAAAAGRGRSFSPAAPAPSSVRLPGRQAPAPAAA) is disordered. GTP-binding positions include 63 to 69 (GDEGKGK) and 91 to 93 (GHT). Aspartate 64 serves as the catalytic Proton acceptor. Mg(2+) is bound by residues aspartate 64 and glycine 91. Residues 64–67 (DEGK), 89–92 (NAGH), threonine 181, arginine 195, glutamine 275, threonine 290, and arginine 354 contribute to the IMP site. The Proton donor role is filled by histidine 92. 350–356 (TTTGRPR) is a substrate binding site. Residues arginine 356, 382-384 (KLD), and 465-467 (GVG) contribute to the GTP site.

The protein belongs to the adenylosuccinate synthetase family. In terms of assembly, homodimer. Requires Mg(2+) as cofactor.

It is found in the plastid. The protein localises to the chloroplast. It carries out the reaction IMP + L-aspartate + GTP = N(6)-(1,2-dicarboxyethyl)-AMP + GDP + phosphate + 2 H(+). The protein operates within purine metabolism; AMP biosynthesis via de novo pathway; AMP from IMP: step 1/2. In terms of biological role, plays an important role in the de novo pathway and in the salvage pathway of purine nucleotide biosynthesis. Catalyzes the first committed step in the biosynthesis of AMP from IMP. The sequence is that of Adenylosuccinate synthetase, chloroplastic from Triticum aestivum (Wheat).